Here is a 274-residue protein sequence, read N- to C-terminus: Copper chaperone for superoxide dismutase (274 aa).

The region spanning 11-74 is the HMA domain; it reads ACMLEFAVQM…LLEDTGRQAV (64 aa). Residues C22 and C25 each coordinate Cu cation. Residue K76 forms a Glycyl lysine isopeptide (Lys-Gly) (interchain with G-Cter in ubiquitin) linkage. The interval 88 to 234 is superoxide dismutase-like; sequence AAVAILGGSG…LACGIIARSA (147 aa). An intrachain disulfide couples C141 to C227. Residues H147, H155, H164, and D167 each coordinate Zn(2+). Glycyl lysine isopeptide (Lys-Gly) (interchain with G-Cter in ubiquitin) cross-links involve residues K189, K216, and K241. C244 and C246 together coordinate Cu cation.

In the C-terminal section; belongs to the Cu-Zn superoxide dismutase family. As to quaternary structure, homodimer, and heterodimer with SOD1. Interacts with COMMD1. Interacts with XIAP/BIRC4. Interacts with SLC31A1(via C-terminal domain); this interaction is Cu(1+)-mediated. The heterodimer CCS:SOD1 interacts with SLC31A1; this heterotrimer is Cu(1+)-mediated and its maintenance is regulated through SOD1 activation. Cu(2+) is required as a cofactor. Zn(2+) serves as cofactor. In terms of processing, ubiquitinion by XIAP/BIRC4 leads to enhancement of its chaperone activity toward its physiologic target, SOD1, rather than proteasomal degradation. XIAP/BIRC4 preferentially ubiquitinates at Lys-241.

The protein localises to the cytoplasm. Its function is as follows. Delivers copper to copper zinc superoxide dismutase (SOD1). The polypeptide is Copper chaperone for superoxide dismutase (Sus scrofa (Pig)).